The chain runs to 558 residues: MAYKSDIEIAREARKLPILEIGAKLGIAADELLPYGHDKAKVSQGFIDSVQDRADGRLILVTAINPTPAGEGKTTTTVGLGDGLNRIGKNAMICIREASLGPNFGMKGGAAGGGYAQIVPMEEMNLHFTGDFHAITSAHSLLSAMIDNHIYWGNEADIDTRRVVWRRVVDMNDRALRQITCSLGGVSNGFPREAGFDITVASEVMAILCLARDLKDLEKRLGDIIVAYRRDKSPVYCRDIKAEGAMTVLLKDAMQPNLVQTLENNPAFVHGGPFANIAHGCNSVIATKTALKVADYVVTEAGFGADLGAEKFMNIKCRKAGIAPSAVVLVATVRAMKMNGGVAKGDLGAENVAAVNKGCANLGRHIENVKSFGVPVVVAINHFVTDTDAEVQAVRDYCANHGVEAVLSRHWELGSEGSEALARKVVELAESGKANFAPIYPDDMSLFEKIETIAKRIYRADEVLADAKIRNQLKEWEEAGYRNLPVCMAKTQYSFTTDPNRRGAPTGHSVPVREVRLSAGAGFIVVVCGEIMTMPGLPRKPAAETIRLNDAGQIEGLF.

Residue T67 to T74 participates in ATP binding.

The protein belongs to the formate--tetrahydrofolate ligase family.

It catalyses the reaction (6S)-5,6,7,8-tetrahydrofolate + formate + ATP = (6R)-10-formyltetrahydrofolate + ADP + phosphate. Its pathway is one-carbon metabolism; tetrahydrofolate interconversion. The sequence is that of Formate--tetrahydrofolate ligase from Ruegeria pomeroyi (strain ATCC 700808 / DSM 15171 / DSS-3) (Silicibacter pomeroyi).